Here is a 185-residue protein sequence, read N- to C-terminus: Ribosome-recycling factor (185 aa).

The disordered stretch occupies residues 144–164 (KEGEAGEDEVGRAEKDLDKTT).

The protein belongs to the RRF family.

It localises to the cytoplasm. Functionally, responsible for the release of ribosomes from messenger RNA at the termination of protein biosynthesis. May increase the efficiency of translation by recycling ribosomes from one round of translation to another. The chain is Ribosome-recycling factor from Mycobacterium tuberculosis (strain CDC 1551 / Oshkosh).